A 464-amino-acid polypeptide reads, in one-letter code: Argininosuccinate lyase (464 aa).

This sequence belongs to the lyase 1 family. Argininosuccinate lyase subfamily.

Its subcellular location is the cytoplasm. The catalysed reaction is 2-(N(omega)-L-arginino)succinate = fumarate + L-arginine. Its pathway is amino-acid biosynthesis; L-arginine biosynthesis; L-arginine from L-ornithine and carbamoyl phosphate: step 3/3. This Frankia casuarinae (strain DSM 45818 / CECT 9043 / HFP020203 / CcI3) protein is Argininosuccinate lyase.